Reading from the N-terminus, the 1361-residue chain is Rho guanine nucleotide exchange factor 18 (1361 aa).

Disordered stretches follow at residues 33–88 (LQDL…SCSE), 131–156 (SGGG…SRSV), and 244–292 (DGAG…ARER). Basic and acidic residues predominate over residues 50–61 (PDSRPTGEEPGR). Residues 64–73 (LFSSLAGSQD) show a composition bias toward polar residues. Positions 74-88 (LSRRRSWERSRSCSE) are enriched in basic and acidic residues. Basic and acidic residues-rich tracts occupy residues 245–256 (GAGKNEKSDKST) and 271–292 (RQKE…ARER). The segment at 310 to 334 (SSCPLCGKPFLSSASLKEHPRGTLL) adopts a C2H2-type; degenerate zinc-finger fold. The segment at 348–368 (TVSQKGGPQPTPSPAGPGTQL) is disordered. A DH domain is found at 447-644 (KRQDVLYELM…KDIISQVDAK (198 aa)). Residues 684 to 786 (QLHLEGMLCW…WMAHIQRAVE (103 aa)) enclose the PH domain. Disordered regions lie at residues 893 to 980 (ANGQ…DPRL), 1143 to 1211 (LKKQ…RLAK), 1229 to 1264 (AAVQ…SSAS), and 1277 to 1361 (MGKD…VIFF). Thr-912 carries the phosphothreonine modification. Residue Ser-921 is modified to Phosphoserine. Residues 1038–1148 (LEQERQRNFE…LLRRLKKQNT (111 aa)) adopt a coiled-coil conformation. Positions 1191–1211 (YAERPEVARRDSAPTENRLAK) are enriched in basic and acidic residues. The span at 1254 to 1264 (RGSQRWESSAS) shows a compositional bias: polar residues. Residues Ser-1289 and Ser-1291 each carry the phosphoserine modification. Pro residues-rich tracts occupy residues 1300–1317 (PAPP…PPAD) and 1334–1344 (PGPPAPSPLPA). Basic and acidic residues predominate over residues 1349–1361 (AKEDASKEDVIFF).

Interacts with SEPT9; the interaction may inhibit GEF activity. Interacts with Gbetagamma subunits GNB1 and GNG2. Interacts with EPB41L4B. Interacts with PATJ (via C-terminus). Expressed in all tissues tested with highest expression in kidney and pancreas. Weakly or not expressed in liver, skeletal muscle and testis. Isoform 1: Expressed in eosinophils. Isoform 2: Expressed in eosinophils. Isoform 3: Expressed in eosinophils. Isoform 4: Not detected in eosinophils.

Its subcellular location is the cytoplasm. The protein localises to the cytoskeleton. It is found in the cell membrane. The protein resides in the apical cell membrane. Its function is as follows. Acts as a guanine nucleotide exchange factor (GEF) for RhoA GTPases. Its activation induces formation of actin stress fibers. Also acts as a GEF for RAC1, inducing production of reactive oxygen species (ROS). Does not act as a GEF for CDC42. The G protein beta-gamma (Gbetagamma) subunits of heterotrimeric G proteins act as activators, explaining the integrated effects of LPA and other G-protein coupled receptor agonists on actin stress fiber formation, cell shape change and ROS production. Required for EPB41L4B-mediated regulation of the circumferential actomyosin belt in epithelial cells. In Homo sapiens (Human), this protein is Rho guanine nucleotide exchange factor 18 (ARHGEF18).